Reading from the N-terminus, the 284-residue chain is Pantothenate synthetase (284 aa).

Methionine 30 to histidine 37 is an ATP binding site. Histidine 37 functions as the Proton donor in the catalytic mechanism. Glutamine 61 serves as a coordination point for (R)-pantoate. Glutamine 61 is a binding site for beta-alanine. Glycine 149–aspartate 152 contributes to the ATP binding site. Glutamine 155 is a (R)-pantoate binding site. Residues valine 178 and leucine 186–arginine 189 each bind ATP.

Belongs to the pantothenate synthetase family. In terms of assembly, homodimer.

It is found in the cytoplasm. The catalysed reaction is (R)-pantoate + beta-alanine + ATP = (R)-pantothenate + AMP + diphosphate + H(+). It functions in the pathway cofactor biosynthesis; (R)-pantothenate biosynthesis; (R)-pantothenate from (R)-pantoate and beta-alanine: step 1/1. In terms of biological role, catalyzes the condensation of pantoate with beta-alanine in an ATP-dependent reaction via a pantoyl-adenylate intermediate. The sequence is that of Pantothenate synthetase from Yersinia pseudotuberculosis serotype O:1b (strain IP 31758).